The chain runs to 280 residues: Bifunctional protein FolD (280 aa).

Residues 166–168 (GRS) and S191 each bind NADP(+).

The protein belongs to the tetrahydrofolate dehydrogenase/cyclohydrolase family. As to quaternary structure, homodimer.

It carries out the reaction (6R)-5,10-methylene-5,6,7,8-tetrahydrofolate + NADP(+) = (6R)-5,10-methenyltetrahydrofolate + NADPH. The catalysed reaction is (6R)-5,10-methenyltetrahydrofolate + H2O = (6R)-10-formyltetrahydrofolate + H(+). The protein operates within one-carbon metabolism; tetrahydrofolate interconversion. Its function is as follows. Catalyzes the oxidation of 5,10-methylenetetrahydrofolate to 5,10-methenyltetrahydrofolate and then the hydrolysis of 5,10-methenyltetrahydrofolate to 10-formyltetrahydrofolate. In Saccharophagus degradans (strain 2-40 / ATCC 43961 / DSM 17024), this protein is Bifunctional protein FolD.